The chain runs to 286 residues: Fructose-bisphosphate aldolase (286 aa).

S50 contacts D-glyceraldehyde 3-phosphate. The active-site Proton donor is D85. 4 residues coordinate Zn(2+): H86, D107, E137, and H181. Residue G182 participates in dihydroxyacetone phosphate binding. H209 serves as a coordination point for Zn(2+). Dihydroxyacetone phosphate contacts are provided by residues 210–212 (GGT) and 231–234 (NVNT).

The protein belongs to the class II fructose-bisphosphate aldolase family. Requires Zn(2+) as cofactor.

It carries out the reaction beta-D-fructose 1,6-bisphosphate = D-glyceraldehyde 3-phosphate + dihydroxyacetone phosphate. Its pathway is carbohydrate degradation; glycolysis; D-glyceraldehyde 3-phosphate and glycerone phosphate from D-glucose: step 4/4. Functionally, catalyzes the aldol condensation of dihydroxyacetone phosphate (DHAP or glycerone-phosphate) with glyceraldehyde 3-phosphate (G3P) to form fructose 1,6-bisphosphate (FBP) in gluconeogenesis and the reverse reaction in glycolysis. The protein is Fructose-bisphosphate aldolase (fba) of Staphylococcus epidermidis (strain ATCC 35984 / DSM 28319 / BCRC 17069 / CCUG 31568 / BM 3577 / RP62A).